The chain runs to 391 residues: 3-ketoacyl-CoA thiolase (391 aa).

The active-site Acyl-thioester intermediate is Cys95. Active-site proton acceptor residues include His347 and Cys377.

Belongs to the thiolase-like superfamily. Thiolase family. As to quaternary structure, heterotetramer of two alpha chains (FadB) and two beta chains (FadA).

It is found in the cytoplasm. It catalyses the reaction an acyl-CoA + acetyl-CoA = a 3-oxoacyl-CoA + CoA. It participates in lipid metabolism; fatty acid beta-oxidation. Catalyzes the final step of fatty acid oxidation in which acetyl-CoA is released and the CoA ester of a fatty acid two carbons shorter is formed. The polypeptide is 3-ketoacyl-CoA thiolase (Ectopseudomonas oleovorans (Pseudomonas oleovorans)).